The following is a 662-amino-acid chain: Sodium/glucose cotransporter 1 (662 aa).

Over 1-24 the chain is Extracellular; the sequence is MDSSTLSPLTTSTAAPLESYERIR. Residues 25–47 traverse the membrane as a helical segment; sequence NAADISVIVIYFLVVMAVGLWAM. At 48–66 the chain is on the cytoplasmic side; sequence FSTNRGTVGGFFLAGRSMV. The helical transmembrane segment at 67–90 threads the bilayer; the sequence is WWPIGASLFASNIGSGHFVGLAGT. Residues 91 to 95 are Extracellular-facing; that stretch reads GAASG. Residues 96 to 117 traverse the membrane as a helical segment; the sequence is IATGGFEWNALIMVVVLGWVFV. Residues 118–139 are Cytoplasmic-facing; it reads PIYIRAGVVTMPEYLQKRFGGK. A helical membrane pass occupies residues 140–169; it reads RIQIYLSILSLLLYIFTKISADIFSGAIFI. Residues 170–176 are Extracellular-facing; sequence QLTLGLD. The helical transmembrane segment at 177–193 threads the bilayer; sequence IYVAIIILLVITGLYTI. Topologically, residues 194–202 are cytoplasmic; sequence TGGLAAVIY. Residues 203–221 form a helical membrane-spanning segment; that stretch reads TDTLQTAIMMVGSVILTGF. The Extracellular segment spans residues 222-275; sequence AFHEVGGYEAFTEKYMRAIPSQISYGNTSIPQKCYTPREDAFHIFRDAITGDIP. N-linked (GlcNAc...) asparagine glycosylation is present at N248. 5 cysteine pairs are disulfide-bonded: C255–C511, C255–C608, C345–C351, C355–C361, and C517–C522. The helical transmembrane segment at 276-295 threads the bilayer; that stretch reads WPGLVFGMSILTLWYWCTDQ. Over 296-309 the chain is Cytoplasmic; the sequence is VIVQRCLSAKNLSH. The helical transmembrane segment at 310 to 331 threads the bilayer; it reads VKAGCILCGYLKVMPMFLIVMM. The Extracellular segment spans residues 332 to 375; it reads GMVSRILYTDKVACVVPSECERYCGTRVGCTNIAFPTLVVELMP. A helical membrane pass occupies residues 376–406; sequence NGLRGLMLSVMMASLMSSLTSIFNSASTLFT. Residues 407-422 are Cytoplasmic-facing; it reads MDIYTKIRKKASEKEL. Residues 423-444 traverse the membrane as a helical segment; that stretch reads MIAGRLFMLFLIGISIAWVPIV. Over 445–451 the chain is Extracellular; the sequence is QSAQSGQ. A helical transmembrane segment spans residues 452-477; the sequence is LFDYIQSITSYLGPPIAAVFLLAIFW. Residue Q457 coordinates D-glucose. The Cytoplasmic portion of the chain corresponds to 478–481; it reads KRVN. The chain crosses the membrane as a helical span at residues 482–504; it reads EPGAFWGLVLGFLIGISRMITEF. The Extracellular segment spans residues 505-525; that stretch reads AYGTGSCMEPSNCPTIICGVH. A helical transmembrane segment spans residues 526-547; the sequence is YLYFAIILFVISIITVVVVSLF. The Cytoplasmic portion of the chain corresponds to 548 to 642; that stretch reads TKPIPDVHLY…TSEHPLWRTV (95 aa). Residues 643–660 traverse the membrane as a helical segment; that stretch reads VNINGVILLAVAVFCYAY. Residues 661–662 are Extracellular-facing; that stretch reads FA.

This sequence belongs to the sodium:solute symporter (SSF) (TC 2.A.21) family. N-glycosylation is not necessary for the cotransporter function. Found predominantly in intestine, renal cortex and in outer renal medulla.

It is found in the apical cell membrane. It carries out the reaction D-glucose(out) + 2 Na(+)(out) = D-glucose(in) + 2 Na(+)(in). The enzyme catalyses D-galactose(out) + 2 Na(+)(out) = D-galactose(in) + 2 Na(+)(in). Its activity is regulated as follows. Enhanced by the interaction with PDZK1IP1/MAP17; but unlike SLC5A2/SGLT2, PDZK1IP1 is not essential for SLC5A1 transporter activity. Possibly modulated by cholesterol binding. In terms of biological role, electrogenic Na(+)-coupled sugar symporter that actively transports D-glucose or D-galactose at the plasma membrane, with a Na(+) to sugar coupling ratio of 2:1. Transporter activity is driven by a transmembrane Na(+) electrochemical gradient set by the Na(+)/K(+) pump. Has a primary role in the transport of dietary monosaccharides from enterocytes to blood. Responsible for the absorption of D-glucose or D-galactose across the apical brush-border membrane of enterocytes, whereas basolateral exit is provided by GLUT2. Additionally, functions as a D-glucose sensor in enteroendocrine cells, triggering the secretion of the incretins GCG and GIP that control food intake and energy homeostasis. Together with SGLT2, functions in reabsorption of D-glucose from glomerular filtrate, playing a nonredundant role in the S3 segment of the proximal tubules. Transports D-glucose into endometrial epithelial cells, controlling glycogen synthesis and nutritional support for the embryo as well as the decidual transformation of endometrium prior to conception. Acts as a water channel enabling passive water transport in response to the osmotic gradient created upon sugar and Na(+) uptake. Has high water conductivity comparable to aquaporins and therefore is expected to play an important role in transepithelial water permeability, especially in the small intestine. In Oryctolagus cuniculus (Rabbit), this protein is Sodium/glucose cotransporter 1 (SLC5A1).